Reading from the N-terminus, the 273-residue chain is Probable cysteine-rich repeat secretory protein 6 (273 aa).

The N-terminal stretch at 1–21 is a signal peptide; the sequence is MTRIIDVSLFCFFLFSLGAMS. 2 Gnk2-homologous domains span residues 22–122 and 128–241; these read QPSQ…DNSF and DSPA…ISAL.

The protein belongs to the cysteine-rich repeat secretory protein family.

Its subcellular location is the secreted. The sequence is that of Probable cysteine-rich repeat secretory protein 6 (CRRSP6) from Arabidopsis thaliana (Mouse-ear cress).